Here is a 158-residue protein sequence, read N- to C-terminus: Transcription elongation factor GreA (158 aa).

A coiled-coil region spans residues 53–73 (EQQSFVEGRIQEIEGKLSNAQ).

This sequence belongs to the GreA/GreB family.

Necessary for efficient RNA polymerase transcription elongation past template-encoded arresting sites. The arresting sites in DNA have the property of trapping a certain fraction of elongating RNA polymerases that pass through, resulting in locked ternary complexes. Cleavage of the nascent transcript by cleavage factors such as GreA or GreB allows the resumption of elongation from the new 3'terminus. GreA releases sequences of 2 to 3 nucleotides. The chain is Transcription elongation factor GreA from Alkalilimnicola ehrlichii (strain ATCC BAA-1101 / DSM 17681 / MLHE-1).